The following is a 211-amino-acid chain: MQNGTEDKSNIPARSNDDVLPPLAVRLTMKVMRLIFIGKMFAYSFVPFPPFKLLTFDNTVGWFVAYSAIVSIWGFAVWMERGYRHKINLLPPRCTKIRCSRCNTRIRSPNWFKYKNWLYFFLLYVSLTTSNLIIQLASFMTEMSRRGISVPGTKDPGKRDYLGLIIPMRFIGAFIHYMTANLFKEYYLHNGPLEKNDRPSTDEKTSENETL.

At 1–33 the chain is on the cytoplasmic side; the sequence is MQNGTEDKSNIPARSNDDVLPPLAVRLTMKVMR. Residues 34–54 form a helical membrane-spanning segment; it reads LIFIGKMFAYSFVPFPPFKLL. The Lumenal segment spans residues 55–58; the sequence is TFDN. A helical membrane pass occupies residues 59-79; that stretch reads TVGWFVAYSAIVSIWGFAVWM. Over 80–116 the chain is Cytoplasmic; sequence ERGYRHKINLLPPRCTKIRCSRCNTRIRSPNWFKYKN. The helical transmembrane segment at 117–137 threads the bilayer; it reads WLYFFLLYVSLTTSNLIIQLA. Topologically, residues 138 to 162 are lumenal; that stretch reads SFMTEMSRRGISVPGTKDPGKRDYL. A helical transmembrane segment spans residues 163–183; the sequence is GLIIPMRFIGAFIHYMTANLF. The Cytoplasmic segment spans residues 184 to 211; sequence KEYYLHNGPLEKNDRPSTDEKTSENETL.

The protein resides in the endoplasmic reticulum membrane. This is an uncharacterized protein from Saccharomyces cerevisiae (strain ATCC 204508 / S288c) (Baker's yeast).